Reading from the N-terminus, the 31-residue chain is uncharacterized protein (31 aa).

The tract at residues 1 to 31 (MKKLERMSEVSQMCSEAKKNRKRMSVVSSVA) is disordered.

This is an uncharacterized protein from Sulfolobus islandicus filamentous virus (isolate Iceland/Hveragerdi) (SIFV).